The primary structure comprises 394 residues: Ornithine aminotransferase 1 (394 aa).

Lysine 252 carries the N6-(pyridoxal phosphate)lysine modification.

It belongs to the class-III pyridoxal-phosphate-dependent aminotransferase family. OAT subfamily. Pyridoxal 5'-phosphate serves as cofactor.

The protein localises to the cytoplasm. The catalysed reaction is a 2-oxocarboxylate + L-ornithine = L-glutamate 5-semialdehyde + an L-alpha-amino acid. It participates in amino-acid biosynthesis; L-proline biosynthesis; L-glutamate 5-semialdehyde from L-ornithine: step 1/1. Functionally, catalyzes the interconversion of ornithine to glutamate semialdehyde. The protein is Ornithine aminotransferase 1 of Staphylococcus aureus (strain COL).